A 662-amino-acid chain; its full sequence is UPF0313 protein CPE1196 (662 aa).

One can recognise a Radical SAM core domain in the interval 296–567 (AIEEVKFSLV…AMQRALLQFK (272 aa)). Residues Cys310, Cys314, and Cys317 each contribute to the [4Fe-4S] cluster site. The tract at residues 597–662 (RDKNSFGKGN…QRGSKGKKRR (66 aa)) is disordered. Residues 618-632 (NRNENSGRRESEDKK) are compositionally biased toward basic and acidic residues. Over residues 633–644 (RSSHSKKQRGNK) the composition is skewed to basic residues.

Belongs to the UPF0313 family. It depends on [4Fe-4S] cluster as a cofactor.

In Clostridium perfringens (strain 13 / Type A), this protein is UPF0313 protein CPE1196.